The primary structure comprises 80 residues: Conotoxin Pu11.1 (80 aa).

A signal peptide spans 1-19 (MKLVLAIVLILMLLSLSTG). Residues 20 to 42 (AEMSDNHASRSATALTDRLLGPK) constitute a propeptide that is removed on maturation. Disulfide bonds link Cys46/Cys60, Cys53/Cys65, Cys59/Cys72, and Cys64/Cys79.

Belongs to the conotoxin I3 superfamily. As to expression, expressed by the venom duct.

The protein localises to the secreted. In Conus pulicarius (Flea-bitten cone), this protein is Conotoxin Pu11.1.